Consider the following 301-residue polypeptide: GTPase IMAP family member 3 (301 aa).

Over 1 to 279 (METLQNVVTG…GKKLEVLHSD (279 aa)) the chain is Cytoplasmic. One can recognise an AIG1-type G domain in the interval 20 to 223 (SRPLRILLVG…HSNDLFLHAE (204 aa)). Residues 29–37 (GKSGCGKSA), S50, 147–149 (RKE), and N184 contribute to the GTP site. The segment at 263-301 (VLKVLPIGKKLEVLHSDFCWYLVLAILIFFVFFFLLFYV) is required for targeting to the endoplasmic reticulum. Residues 280–300 (FCWYLVLAILIFFVFFFLLFY) traverse the membrane as a helical; Anchor for type IV membrane protein segment. Position 301 (V301) is a topological domain, lumenal.

It belongs to the TRAFAC class TrmE-Era-EngA-EngB-Septin-like GTPase superfamily. AIG1/Toc34/Toc159-like paraseptin GTPase family. IAN subfamily. In terms of assembly, interacts with BAD, BAK1, BAX, BCL2, BCL2L1/Bcl-xL and BCL2L11/BimEL. The interaction with BAX is increased, when cells initiate apoptosis upon IL2 withdrawal. As to expression, expressed in thymus (in thymocytes), spleen (in splenocytes), lymph node and, at lower levels, in lung. Highly expressed in T lymphocytes.

The protein resides in the endoplasmic reticulum membrane. Functionally, during thymocyte development, may support the positive selection of CD4 and CD8 T cells. May play a role in mitochondrial DNA segregation in hematopoietic tissues. Binds GTP. The sequence is that of GTPase IMAP family member 3 (Gimap3) from Mus musculus (Mouse).